A 2172-amino-acid polypeptide reads, in one-letter code: MTNLGGGGAEEQARLKQYGYKVNSSLVLNSDERRRDTHESSGEPESLRGRIDPKSFGDRVVRGRPHELDERLNKSKKKKERCDDLVSARESKRVRLREVSVLNDTEDGVYQPKTKETRVAFEIMLGLIQQQLGGQPLDIVCGAADEILAVLKNESVKNHEKKVEIEKLLNVITDQVFSQFVSIGKLITDYEEGGDSLSGKASEDGGLDYDIGVALECEEDDDESDLDMVQDEKDEEDEDVVELNKTGVVQVGVAINGEDARQAKEDTSLNVLDIDAYWLQRKISQEYEQKIDAQECQELAEELLKILAEGNDRDVEIKLLEHLQFEKFSLVKFLLQNRLKVVWCTRLARGRDQEERNQIEEEMLGLGSELAAIVKELHAKRATAKEREEKREKDIKEEAQHLMDDDSGVDGDRGMRDVDDLDLENGWLKGQRQVMDLESLAFNQGGFTRENNKCELPDRSFRIRGKEFDEVHVPWVSKKFDSNEKLVKISDLPEWAQPAFRGMQQLNRVQSKVYGTALFKADNILLCAPTGAGKTNVAVLTILHQLGLNMNPGGTFNHGNYKIVYVAPMKALVAEVVDSLSQRLKDFGVTVKELSGDQSLTGQEIKETQIIVTTPEKWDIITRKSGDRTYTQLVRLLIIDEIHLLDDNRGPVLESIVARTLRQIESTKEHIRLVGLSATLPNCDDVASFLRVDLKNGLFIFDRSYRPVPLGQQYIGINVKKPLRRFQLMNDICYQKVVAVAGKHQVLIFVHSRKETAKTARAIRDTAMANDTLSRFLKEDSQSREILKCLAGLLKNNDLKELLPYGFAIHHAGLTRTDREIVENQFRWGNLQVLISTATLAWGVNLPAHTVIIKGTQVYNPERGEWMELSPLDVMQMIGRAGRPQYDQQGEGIIITGYSKLQYYLRLMNEQLPIESQFISKLADQLNAEIVLGTIQNAREACHWLGYTYLYVRMVRNPTLYGVSPDALAKDLLLEERRADLIHSAATILDKNNLIKYDRKSGHFQVTDLGRIASYYYISHGTIAAYNENLKPTMNDIELCRLFSLSEEFKYVTVRQDEKMELAKLLDRVPIPVKETLEDPSAKINVLLQVYISKLKLEGLSLTSDMVYITQSAGRLLRAIFEIVLKRGWAQLSQKALNLSKMVGKRMWSVQTPLWQFPGIPKEILMKLEKNDLVWERYYDLSSQELGELICNPKMGRPLHKYIHQFPKLKLAAHVQPISRSVLQVELTVTPDFHWDDKANKYVEPFWIIVEDNDGEKILHHEYFLFKKRVIDEDHTLNFTVPISEPIPPQYFIRVVSDKWLDSPTVLPVSFRHLILPEKYPPPTELLDLQPLPVMALRNPSYETLYQDFKHFNPVQTQVFTVLYNTSDNVVVAAPTGSGKTICAEFAILRNHLEGPDSAMRVVYIAPLEAIAKEQFRDWEKKFGKGLGLRVVELTGETLLDLKLLEKGQIIISTPEKWDALSRRWKQRKYIQQVSLFIVDELHLIGGQGGQVLEVIVSRMRYISSQVGNKIRIVALSTSLANAKDLGEWIGASSCGVFNFPPNVRPVPLEIHIHGVDILSFEARMQAMTKPTYTAIVQHAKNKKPAIVFVPTRKHVRLTAVDLIAYSHMDNMKSPDFLLGNLEELEPFLIQICEETLKETLRHGIGYLHEGLSNLDQEIVTQLFEAGRIQVCVMSSSLCWGTPLKAHLVVVMGTHFYDGRENSHSDYPISNLLQMMGRGSRPLLDDAGKCVIFCHAPRKEYYKKFLYEALPVESHLQHFLHDNFNAEVVARVIENKQDAVDYLTWSFMYRRLPQNPNYYNLLGVSHRHLSDHLSELVENTLSDLEVSKCIEIDNELDLSPLNLGMIASYYYINYTTIERFSSLLASKTKMKGLLEILTSASEYDLIPIRPGEEDAVRRLINHQRFSFQNPRCTDPRVKTSALLQAHFSRQKISGNLVMDQCEVLLSATRLLQAMVDVISSNGCLNLALLAMEVSQMVTQGMWDRDSMLLQLPHFTKDLAKRCHENPGNNIETIFDLVEMEDDKRQELLQMSDAQLLDIARFCNRFPNIDLTYEIVGSNEVSPGKDITLQVLLERDMEGRTEVGPVDAPRYPKTKEEGWWLVVGEAKTNQLMAIKRISLQRKAQVKLEFAVPTETGEKSYTLYFMCDSYLGCDQEYSFTVDVKDSDAADHMEE.

Residues 20-83 form a disordered region; the sequence is YKVNSSLVLN…KSKKKKERCD (64 aa). Residues 30-73 show a composition bias toward basic and acidic residues; sequence SDERRRDTHESSGEPESLRGRIDPKSFGDRVVRGRPHELDERLN. Residues 515-698 enclose the Helicase ATP-binding 1 domain; sequence GTALFKADNI…FLRVDLKNGL (184 aa). Residue 528 to 535 coordinates ATP; the sequence is APTGAGKT. Positions 640–643 match the DEIH box motif; the sequence is DEIH. In terms of domain architecture, Helicase C-terminal 1 spans 742-946; the sequence is GKHQVLIFVH…NAREACHWLG (205 aa). Residues 1007–1308 enclose the SEC63 1 domain; sequence TDLGRIASYY…KWLDSPTVLP (302 aa). One can recognise a Helicase ATP-binding 2 domain in the interval 1361 to 1538; the sequence is TVLYNTSDNV…WIGASSCGVF (178 aa). 1374 to 1381 contacts ATP; the sequence is APTGSGKT. The short motif at 1480–1483 is the DELH box element; the sequence is DELH. A Helicase C-terminal 2 domain is found at 1575-1772; sequence AIVQHAKNKK…NFNAEVVARV (198 aa). The SEC63 2 domain occupies 1840–2157; the sequence is PLNLGMIASY…YLGCDQEYSF (318 aa).

Its subcellular location is the nucleus. It catalyses the reaction ATP + H2O = ADP + phosphate + H(+). Functionally, RNA helicase that plays an essential role in pre-mRNA splicing as component of the U5 snRNP and U4/U6-U5 tri-snRNP complexes. Involved in spliceosome assembly, activation and disassembly. This is DExH-box ATP-dependent RNA helicase DExH13 from Arabidopsis thaliana (Mouse-ear cress).